The primary structure comprises 305 residues: Auxin-responsive protein IAA27 (305 aa).

The short motif at Leu45–Leu49 is the EAR-like (transcriptional repression) element. Disordered regions lie at residues Thr96–Thr119 and Lys155–Gly180. Positions Lys155 to Ser170 are enriched in polar residues. A PB1 domain is found at Cys185–Ser287.

This sequence belongs to the Aux/IAA family. As to quaternary structure, homodimers and heterodimers. Interacts with phytochrome A. Interacts with TPL.

It is found in the nucleus. Functionally, aux/IAA proteins are short-lived transcriptional factors that function as repressors of early auxin response genes at low auxin concentrations. Repression is thought to result from the interaction with auxin response factors (ARFs), proteins that bind to the auxin-responsive promoter element (AuxRE). Formation of heterodimers with ARF proteins may alter their ability to modulate early auxin response genes expression. This chain is Auxin-responsive protein IAA27 (IAA27), found in Arabidopsis thaliana (Mouse-ear cress).